Consider the following 162-residue polypeptide: Small ribosomal subunit protein uS7m (162 aa).

This sequence belongs to the universal ribosomal protein uS7 family. In terms of assembly, part of the small ribosomal subunit.

The protein localises to the mitochondrion. One of the primary rRNA binding proteins, it binds directly to 16S-like rRNA where it nucleates assembly of the head domain of the small subunit. The protein is Small ribosomal subunit protein uS7m (mrps7) of Dictyostelium discoideum (Social amoeba).